The following is a 274-amino-acid chain: Thiamine kinase (274 aa).

It belongs to the thiamine kinase family.

It catalyses the reaction thiamine + ATP = thiamine phosphate + ADP + H(+). Its pathway is cofactor biosynthesis; thiamine diphosphate biosynthesis; thiamine phosphate from thiamine: step 1/1. Functionally, catalyzes the ATP-dependent phosphorylation of thiamine to thiamine phosphate. Is involved in thiamine salvage. This Escherichia coli (strain SMS-3-5 / SECEC) protein is Thiamine kinase.